A 475-amino-acid polypeptide reads, in one-letter code: MDSKSSIVLEIGGRYTKCGYSPESSPRFIIPTNLLPLNISSYLSGGASFDNFKKEITSDNETITTTNQIPTKLPTQSQLKESLFIFFKTIFLNYLLCKSDERKIIIVENIFLPRLFRESMVSVLFEQYRVPLIVFINPTASLIPTLRTTALLIDSGFSETRVLPIYEGVGILKAYKSISLGSESLINQLKQYLQSNITNGIIIDNQNNQSITDSMICNQLLNDKILNSIQLLEDIITRCCFCSFKNKNNNNIEINNINYRISKEYSILIDGNNIRKGLVDVLYKDVNNNDNNNNNKEDDDENLEEGNIATTILNTLLKCEHDQRKPLSHNILLLGGTTMLAGFKKRLVLELHRQLKMNENSIYRNELFGLIGHFQFINHPFENNYLSWLGGSILANALEHVHSKITLESYLNAPSQFKRSQLIPEWEKLTNINNYTQIAQATMGTTINPLQFNSTSSLFSPFTSSSDLSSHLNKD.

This sequence belongs to the actin family.

The protein localises to the cytoplasm. Its subcellular location is the cytoskeleton. The chain is Actin-related protein 10 from Dictyostelium discoideum (Social amoeba).